Reading from the N-terminus, the 175-residue chain is Ribosome maturation factor RimM (175 aa).

The 78-residue stretch at 98-175 (EGEYYWHQLE…EMRVDWDADF (78 aa)) folds into the PRC barrel domain.

It belongs to the RimM family. As to quaternary structure, binds ribosomal protein uS19.

Its subcellular location is the cytoplasm. An accessory protein needed during the final step in the assembly of 30S ribosomal subunit, possibly for assembly of the head region. Essential for efficient processing of 16S rRNA. May be needed both before and after RbfA during the maturation of 16S rRNA. It has affinity for free ribosomal 30S subunits but not for 70S ribosomes. The sequence is that of Ribosome maturation factor RimM from Pseudomonas aeruginosa (strain ATCC 15692 / DSM 22644 / CIP 104116 / JCM 14847 / LMG 12228 / 1C / PRS 101 / PAO1).